The sequence spans 470 residues: Aminoacyl transferase sphA (470 aa).

Pyridoxal 5'-phosphate-binding residues include Ser212, His244, and Thr272. The residue at position 275 (Lys275) is an N6-(pyridoxal phosphate)lysine.

The protein belongs to the class-II pyridoxal-phosphate-dependent aminotransferase family. BioF subfamily. In terms of assembly, homodimer. Requires pyridoxal 5'-phosphate as cofactor.

Its pathway is secondary metabolite biosynthesis. Aminoacyl transferase; part of the gene cluster that mediates the biosynthesis of sphingofungins, bioactive molecules acting as sphingolipid inhibitors via inhibiting serine palmitoyl transferase (SPT). Within the pathway, sphA transfers 2-methyl-aminomalonate and 2-hydroxymethyl-aminomalonate onto the sphB product 3-hydroxyoctadeca-4,10-dienoyl-ACP to produce the precursors of sphingofungins E and F. The substrate specificity of sphA using 2-methyl-aminomalonate and 2-hydroxymethyl-aminomalonate instread of aminomalonate is responsible for the biosynthesis of sphingofungins E and F but not B and C like in Aspergillus fumigatus. The PKS sphB does not contain any putative thioesterase domain for releasing the nascent polyketide chain and it has been suggested that aminoacyl transferases can facilitate the polyketide chain release. This is Aminoacyl transferase sphA from Byssochlamys spectabilis (Paecilomyces variotii).